We begin with the raw amino-acid sequence, 290 residues long: Chloride intracellular channel exc-4 (290 aa).

Residues 37 to 57 (LFCQEFWMELYALYEIGVARV) traverse the membrane as a helical segment.

The protein belongs to the chloride channel CLIC family. Monomer. In terms of tissue distribution, expressed in the secretory system, hypodermis, vulva, pharyngeal muscle, rectal gland, tubular rectal epithelium cells, and tubular neuronal support cells in the head and tail.

It is found in the cytoplasm. The protein localises to the membrane. In terms of biological role, may insert into membranes and form chloride ion channels. Involved in the formation of the excretory canal. Required to prevent cystic lumenal expansions in the excretory cell. Not required for formation of the initial tube, but is required for regulating the size of the tube lumen as it grows. The sequence is that of Chloride intracellular channel exc-4 (exc-4) from Caenorhabditis elegans.